A 338-amino-acid polypeptide reads, in one-letter code: Ketol-acid reductoisomerase (NADP(+)) (338 aa).

The KARI N-terminal Rossmann domain maps to 1–181 (MKIYYDKDCN…GGGRAGIIET (181 aa)). NADP(+)-binding positions include 24–27 (YGSQ), R47, S50, S52, and 82–85 (DETQ). Residue H107 is part of the active site. Residue G133 participates in NADP(+) binding. Positions 182-327 (SFKEETETDL…ARLRSMMSWI (146 aa)) constitute a KARI C-terminal knotted domain. Mg(2+) contacts are provided by D190, E194, E226, and E230. Residue S251 participates in substrate binding.

Belongs to the ketol-acid reductoisomerase family. Requires Mg(2+) as cofactor.

It carries out the reaction (2R)-2,3-dihydroxy-3-methylbutanoate + NADP(+) = (2S)-2-acetolactate + NADPH + H(+). The catalysed reaction is (2R,3R)-2,3-dihydroxy-3-methylpentanoate + NADP(+) = (S)-2-ethyl-2-hydroxy-3-oxobutanoate + NADPH + H(+). The protein operates within amino-acid biosynthesis; L-isoleucine biosynthesis; L-isoleucine from 2-oxobutanoate: step 2/4. Its pathway is amino-acid biosynthesis; L-valine biosynthesis; L-valine from pyruvate: step 2/4. In terms of biological role, involved in the biosynthesis of branched-chain amino acids (BCAA). Catalyzes an alkyl-migration followed by a ketol-acid reduction of (S)-2-acetolactate (S2AL) to yield (R)-2,3-dihydroxy-isovalerate. In the isomerase reaction, S2AL is rearranged via a Mg-dependent methyl migration to produce 3-hydroxy-3-methyl-2-ketobutyrate (HMKB). In the reductase reaction, this 2-ketoacid undergoes a metal-dependent reduction by NADPH to yield (R)-2,3-dihydroxy-isovalerate. In Geobacter metallireducens (strain ATCC 53774 / DSM 7210 / GS-15), this protein is Ketol-acid reductoisomerase (NADP(+)).